Here is a 453-residue protein sequence, read N- to C-terminus: Succinate-semialdehyde dehydrogenase (acetylating) (453 aa).

188–193 (ATGGAG) contacts NADP(+). Cys242 is an active-site residue.

In terms of assembly, homodimer.

It carries out the reaction succinate semialdehyde + NADP(+) + CoA = succinyl-CoA + NADPH + H(+). In terms of biological role, catalyzes the reduction of succinate semialdehyde to succinyl-CoA. The enzyme is specific for succinate semialdehyde and succinyl-CoA, and only shows low activity with palmitoyl-CoA. There is no activity with NAD(+) as cosubstrate. This is Succinate-semialdehyde dehydrogenase (acetylating) (sucD) from Clostridium kluyveri (strain ATCC 8527 / DSM 555 / NBRC 12016 / NCIMB 10680 / K1).